The chain runs to 348 residues: Xaa-Pro dipeptidase (348 aa).

Residues Asp-209, Asp-220, His-284, Glu-313, and Glu-327 each coordinate Co(2+).

It belongs to the peptidase M24B family. Archaeal-type prolidase subfamily. In terms of assembly, homodimer. Co(2+) serves as cofactor. The cofactor is Mn(2+).

It is found in the cytoplasm. It carries out the reaction Xaa-L-Pro dipeptide + H2O = an L-alpha-amino acid + L-proline. Splits dipeptides with a prolyl in the C-terminal position and a nonpolar amino acid at the N-terminal position. The chain is Xaa-Pro dipeptidase (pepQ) from Pyrococcus furiosus (strain ATCC 43587 / DSM 3638 / JCM 8422 / Vc1).